The following is a 319-amino-acid chain: Cell division protein PomZ (319 aa).

An ATP-binding site is contributed by 61–68 (KGGTGKTS).

This sequence belongs to the ParA family. As to quaternary structure, interacts with FtsZ in pull-down experiments.

It localises to the cytoplasm. Functionally, spatial regulator of cell division that is involved in identifying the incipient division site, recruiting FtsZ to the division site and stabilizing the Z-ring. Binds ATP and GTP. In Myxococcus xanthus (strain DK1622), this protein is Cell division protein PomZ.